The primary structure comprises 405 residues: Dihydrolipoyllysine-residue succinyltransferase component of 2-oxoglutarate dehydrogenase complex (405 aa).

In terms of domain architecture, Lipoyl-binding spans 3–78 (SVDILVPDLP…TSRQILGRLR (76 aa)). N6-lipoyllysine is present on K44. The interval 75–111 (GRLREGNSAGKETSAKSEEKASTPAQRQQASLEEQNN) is disordered. The span at 97-111 (TPAQRQQASLEEQNN) shows a compositional bias: polar residues. Positions 113–150 (ALSPAIRRLLAEHNLDASAIKGTGVGGRLTREDVEKHL) constitute a Peripheral subunit-binding (PSBD) domain. At K148 the chain carries N6-acetyllysine. The span at 153–173 (APAKESAPAAAAPAAQPALAA) shows a compositional bias: low complexity. Residues 153–178 (APAKESAPAAAAPAAQPALAARSEKR) are disordered. Residues H376 and D380 contribute to the active site.

The protein belongs to the 2-oxoacid dehydrogenase family. Forms a 24-polypeptide structural core with octahedral symmetry. Part of the 2-oxoglutarate dehydrogenase (OGDH) complex composed of E1 (2-oxoglutarate dehydrogenase), E2 (dihydrolipoamide succinyltransferase) and E3 (dihydrolipoamide dehydrogenase); the complex contains multiple copies of the three enzymatic components (E1, E2 and E3). Interacts with SucA (via N-terminus), the E1 component of OGDH complex. (R)-lipoate is required as a cofactor.

The catalysed reaction is N(6)-[(R)-dihydrolipoyl]-L-lysyl-[protein] + succinyl-CoA = N(6)-[(R)-S(8)-succinyldihydrolipoyl]-L-lysyl-[protein] + CoA. It functions in the pathway amino-acid degradation; L-lysine degradation via saccharopine pathway; glutaryl-CoA from L-lysine: step 6/6. In terms of biological role, E2 component of the 2-oxoglutarate dehydrogenase (OGDH) complex which catalyzes the second step in the conversion of 2-oxoglutarate to succinyl-CoA and CO(2). This Escherichia coli O157:H7 protein is Dihydrolipoyllysine-residue succinyltransferase component of 2-oxoglutarate dehydrogenase complex (sucB).